We begin with the raw amino-acid sequence, 183 residues long: MRGPQLSIHLIGLPGSGKSTVGRHLARRLGLPFIDSDHVIEQRIGGSIRGFFDREGEAAFRDLEEEVILELTEANVPPQVLATGGGVVIRPGNRTRLRERGTVVYLNASPEEIFRHIRHDQTRPLLQVGSPLDRLRELQRERDPLYREAAHFVISPERGKNVAALVQHIAMQLELAGIRPPSP.

Residue 15 to 20 participates in ATP binding; it reads GSGKST. Residue Ser19 participates in Mg(2+) binding. Substrate contacts are provided by Asp37, Arg61, and Gly85. Arg123 is an ATP binding site. Arg142 is a substrate binding site.

The protein belongs to the shikimate kinase family. As to quaternary structure, monomer. Mg(2+) is required as a cofactor.

It localises to the cytoplasm. It catalyses the reaction shikimate + ATP = 3-phosphoshikimate + ADP + H(+). Its pathway is metabolic intermediate biosynthesis; chorismate biosynthesis; chorismate from D-erythrose 4-phosphate and phosphoenolpyruvate: step 5/7. Functionally, catalyzes the specific phosphorylation of the 3-hydroxyl group of shikimic acid using ATP as a cosubstrate. The sequence is that of Shikimate kinase from Paracidovorax citrulli (strain AAC00-1) (Acidovorax citrulli).